A 273-amino-acid polypeptide reads, in one-letter code: Dermonecrotic toxin LvSicTox-alphaIC1ai (273 aa).

The active site involves histidine 5. Mg(2+) is bound by residues glutamate 25 and aspartate 27. Residue histidine 41 is the Nucleophile of the active site. 2 disulfide bridges follow: cysteine 45-cysteine 51 and cysteine 47-cysteine 190. Position 85 (aspartate 85) interacts with Mg(2+).

This sequence belongs to the arthropod phospholipase D family. Class II subfamily. It depends on Mg(2+) as a cofactor. As to expression, expressed by the venom gland.

It localises to the secreted. It catalyses the reaction an N-(acyl)-sphingosylphosphocholine = an N-(acyl)-sphingosyl-1,3-cyclic phosphate + choline. The catalysed reaction is an N-(acyl)-sphingosylphosphoethanolamine = an N-(acyl)-sphingosyl-1,3-cyclic phosphate + ethanolamine. The enzyme catalyses a 1-acyl-sn-glycero-3-phosphocholine = a 1-acyl-sn-glycero-2,3-cyclic phosphate + choline. It carries out the reaction a 1-acyl-sn-glycero-3-phosphoethanolamine = a 1-acyl-sn-glycero-2,3-cyclic phosphate + ethanolamine. Functionally, dermonecrotic toxins cleave the phosphodiester linkage between the phosphate and headgroup of certain phospholipids (sphingolipid and lysolipid substrates), forming an alcohol (often choline) and a cyclic phosphate. This toxin acts on sphingomyelin (SM). It may also act on ceramide phosphoethanolamine (CPE), lysophosphatidylcholine (LPC) and lysophosphatidylethanolamine (LPE), but not on lysophosphatidylserine (LPS), and lysophosphatidylglycerol (LPG). It acts by transphosphatidylation, releasing exclusively cyclic phosphate products as second products. Induces dermonecrosis, hemolysis, increased vascular permeability, edema, inflammatory response, and platelet aggregation. This chain is Dermonecrotic toxin LvSicTox-alphaIC1ai, found in Loxosceles variegata (Recluse spider).